We begin with the raw amino-acid sequence, 590 residues long: Rho GTPase-activating protein 36 (590 aa).

The 201-residue stretch at 214-414 folds into the Rho-GAP domain; sequence MSLNPIAQQI…AMIDNWDILF (201 aa). The segment at 526–590 is disordered; it reads IPNNEDTDSD…KGKFATRFFP (65 aa).

In terms of assembly, may interacts (via the Rho-GAP domain) with the active form of RAC1.

Functionally, GTPase activator for the Rho-type GTPases by converting them to an inactive GDP-bound state. The sequence is that of Rho GTPase-activating protein 36 (Arhgap36) from Mus musculus (Mouse).